Here is an 85-residue protein sequence, read N- to C-terminus: Putative membrane protein insertion efficiency factor (85 aa).

Belongs to the UPF0161 family.

Its subcellular location is the cell inner membrane. Functionally, could be involved in insertion of integral membrane proteins into the membrane. This Dictyoglomus thermophilum (strain ATCC 35947 / DSM 3960 / H-6-12) protein is Putative membrane protein insertion efficiency factor.